A 343-amino-acid chain; its full sequence is Tumor necrosis factor receptor superfamily member wgn (343 aa).

2 disordered regions span residues 1-44 and 74-96; these read MMPP…IGGS and SSAANTDIAPPDPPPVSQVSIAS. The first 76 residues, 1-76, serve as a signal peptide directing secretion; sequence MMPPRLPGGH…ATSASSSSSA (76 aa). Residues 13–24 show a composition bias toward low complexity; sequence AMRSRSSSSGHH. Basic residues predominate over residues 29-39; that stretch reads FHKRRRRRQQH. The Extracellular portion of the chain corresponds to 77–201; the sequence is ANTDIAPPDP…AAWVLDWQTG (125 aa). A TNFR-Cys repeat occupies 99–137; it reads PCAPQHWWDSQRDRCTPCTRCQGEMIPLRPCQLHTDTIC. Intrachain disulfides connect Cys100–Cys113, Cys116–Cys129, and Cys119–Cys137. A helical transmembrane segment spans residues 202–222; that stretch reads VLYVAVLTCLVFFSVAACILI. The Cytoplasmic portion of the chain corresponds to 223 to 343; sequence HHMRQWRRME…GVRGCSGLKG (121 aa). Positions 225 to 257 form a coiled coil; sequence MRQWRRMERRLDQDVEELSTKLMAKLAEVQSLD.

In terms of assembly, monomer. Interacts (via extracellular cystein-rich domain) with egr (via secreted TNF-homology soluble form); forms heterohexamers when 3 copies associate with egr trimers. Interacts with Traf6. Interacts with Moe. Expressed in the adult midgut; under normal conditions expressed at higher levels than the other TNF receptor grnd.

Its subcellular location is the cell membrane. The protein resides in the cytoplasmic vesicle membrane. Its function is as follows. Receptor for egr. Involved in induction of apoptosis by triggering JNK signaling. Mediates the tumor suppressor activity of egr which eliminates oncogenic cells from epithelia, thereby maintaining epithelial integrity. Following UV-induced epidermal damage, binds to egr released from apoptotic epidermal cells and plays a role in development of thermal allodynia, a responsiveness to subthreshold thermal stimuli which are not normally perceived as noxious. Together with Moe, involved in control of axon targeting of R8 and R2-R5 photoreceptors, independent of egr. The protein is Tumor necrosis factor receptor superfamily member wgn of Drosophila melanogaster (Fruit fly).